The sequence spans 90 residues: Small ribosomal subunit protein uS17 (90 aa).

Belongs to the universal ribosomal protein uS17 family. As to quaternary structure, part of the 30S ribosomal subunit.

Its function is as follows. One of the primary rRNA binding proteins, it binds specifically to the 5'-end of 16S ribosomal RNA. The sequence is that of Small ribosomal subunit protein uS17 from Dehalococcoides mccartyi (strain ATCC BAA-2100 / JCM 16839 / KCTC 5957 / BAV1).